The primary structure comprises 435 residues: Citrate synthase (435 aa).

Residues H311 and D370 contribute to the active site.

Belongs to the citrate synthase family.

It catalyses the reaction oxaloacetate + acetyl-CoA + H2O = citrate + CoA + H(+). It functions in the pathway carbohydrate metabolism; tricarboxylic acid cycle; isocitrate from oxaloacetate: step 1/2. In Rickettsia bellii (strain RML369-C), this protein is Citrate synthase (gltA).